Reading from the N-terminus, the 452-residue chain is uncharacterized protein (452 aa).

The next 14 helical transmembrane spans lie at 8–28 (AVFL…SSMI), 39–59 (FHLS…ASAV), 77–97 (FLFG…APTF), 100–122 (LLVM…VGLI), 134–156 (LAVL…GFLI), 161–183 (WPAI…LYMF), 203–222 (LGIV…LLSF), 226–243 (PHAV…AFVW), 266–286 (AVYV…FGLP), 302–322 (LFML…GKWI), 330–350 (PIFA…IFFI), 359–379 (LILS…QAAM), 393–415 (GLFQ…ILFG), and 425–447 (MMGI…FAAL).

It belongs to the major facilitator superfamily.

It is found in the cell membrane. This is an uncharacterized protein from Bacillus subtilis (strain 168).